A 219-amino-acid polypeptide reads, in one-letter code: Ribose-5-phosphate isomerase A (219 aa).

Residues 28–31, 81–84, and 94–97 contribute to the substrate site; these read TGST, DGAD, and KGGG. Residue glutamate 103 is the Proton acceptor of the active site. Lysine 121 serves as a coordination point for substrate.

It belongs to the ribose 5-phosphate isomerase family. As to quaternary structure, homodimer.

The enzyme catalyses aldehydo-D-ribose 5-phosphate = D-ribulose 5-phosphate. It functions in the pathway carbohydrate degradation; pentose phosphate pathway; D-ribose 5-phosphate from D-ribulose 5-phosphate (non-oxidative stage): step 1/1. Its function is as follows. Catalyzes the reversible conversion of ribose-5-phosphate to ribulose 5-phosphate. The protein is Ribose-5-phosphate isomerase A of Nitrosomonas europaea (strain ATCC 19718 / CIP 103999 / KCTC 2705 / NBRC 14298).